The primary structure comprises 274 residues: Large ribosomal subunit protein uL2 (274 aa).

Residues 221-256 (RGTAMNPVDHPHGGGEGRNFGKHPVTPWGVPTKGYK) form a disordered region.

This sequence belongs to the universal ribosomal protein uL2 family. As to quaternary structure, part of the 50S ribosomal subunit. Forms a bridge to the 30S subunit in the 70S ribosome.

Its function is as follows. One of the primary rRNA binding proteins. Required for association of the 30S and 50S subunits to form the 70S ribosome, for tRNA binding and peptide bond formation. It has been suggested to have peptidyltransferase activity; this is somewhat controversial. Makes several contacts with the 16S rRNA in the 70S ribosome. The chain is Large ribosomal subunit protein uL2 from Thioalkalivibrio sulfidiphilus (strain HL-EbGR7).